Consider the following 252-residue polypeptide: Deoxyuridine 5'-triphosphate nucleotidohydrolase, mitochondrial (252 aa).

Residues 1 to 69 (MTPLCPRPAL…AGRLSQGCRG (69 aa)) constitute a mitochondrion transit peptide. Phosphoserine occurs at positions 11, 88, and 99. A disordered region spans residues 78 to 104 (WKGELPKAGGSPAPGPETPAISPSKRA). DUTP contacts are provided by residues 173–175 (RSG), 187–193 (GVIDEDY), Gly198, Arg241, and 246–247 (FG).

This sequence belongs to the dUTPase family. As to quaternary structure, homotrimer. It depends on Mg(2+) as a cofactor. In terms of processing, nuclear isoform 2 is phosphorylated in vivo on Ser-11, a reaction that can be catalyzed in vitro by CDC2. Phosphorylation in mature T-cells occurs in a cell cycle-dependent manner. Isoform 3 is not phosphorylated. As to expression, found in a variety of tissues. Isoform 3 expression is constitutive, while isoform 2 expression correlates with the onset of DNA replication (at protein level). Isoform 2 degradation coincides with the cessation of nuclear DNA replication (at protein level).

Its subcellular location is the nucleus. It localises to the mitochondrion. The enzyme catalyses dUTP + H2O = dUMP + diphosphate + H(+). Its pathway is pyrimidine metabolism; dUMP biosynthesis; dUMP from dCTP (dUTP route): step 2/2. Phosphorylation is necessary for activity. Functionally, catalyzes the cleavage of 2'-deoxyuridine 5'-triphosphate (dUTP) into 2'-deoxyuridine 5'-monophosphate (dUMP) and inorganic pyrophosphate and through its action efficiently prevents uracil misincorporation into DNA and at the same time provides dUMP, the substrate for de novo thymidylate biosynthesis. Inhibits peroxisome proliferator-activated receptor (PPAR) activity by binding of its N-terminal to PPAR, preventing the latter's dimerization with retinoid X receptor. Essential for embryonic development. The sequence is that of Deoxyuridine 5'-triphosphate nucleotidohydrolase, mitochondrial (DUT) from Homo sapiens (Human).